Here is a 143-residue protein sequence, read N- to C-terminus: ATP synthase subunit b' (143 aa).

The chain crosses the membrane as a helical span at residues 6 to 26 (ATLPLMALQFVLLAIILNAIF).

It belongs to the ATPase B chain family. As to quaternary structure, F-type ATPases have 2 components, F(1) - the catalytic core - and F(0) - the membrane proton channel. F(1) has five subunits: alpha(3), beta(3), gamma(1), delta(1), epsilon(1). F(0) has four main subunits: a(1), b(1), b'(1) and c(10-14). The alpha and beta chains form an alternating ring which encloses part of the gamma chain. F(1) is attached to F(0) by a central stalk formed by the gamma and epsilon chains, while a peripheral stalk is formed by the delta, b and b' chains.

The protein resides in the cellular thylakoid membrane. In terms of biological role, f(1)F(0) ATP synthase produces ATP from ADP in the presence of a proton or sodium gradient. F-type ATPases consist of two structural domains, F(1) containing the extramembraneous catalytic core and F(0) containing the membrane proton channel, linked together by a central stalk and a peripheral stalk. During catalysis, ATP synthesis in the catalytic domain of F(1) is coupled via a rotary mechanism of the central stalk subunits to proton translocation. Functionally, component of the F(0) channel, it forms part of the peripheral stalk, linking F(1) to F(0). The b'-subunit is a diverged and duplicated form of b found in plants and photosynthetic bacteria. This Crocosphaera subtropica (strain ATCC 51142 / BH68) (Cyanothece sp. (strain ATCC 51142)) protein is ATP synthase subunit b'.